The following is a 133-amino-acid chain: Putative esterase TV1331 (133 aa).

It belongs to the thioesterase PaaI family.

This is Putative esterase TV1331 from Thermoplasma volcanium (strain ATCC 51530 / DSM 4299 / JCM 9571 / NBRC 15438 / GSS1).